The chain runs to 207 residues: LexA repressor (207 aa).

The segment at residues 28 to 48 (VREIGEAVGLASSSTVHGHLA) is a DNA-binding region (H-T-H motif). Catalysis depends on for autocatalytic cleavage activity residues S129 and K167.

This sequence belongs to the peptidase S24 family. In terms of assembly, homodimer.

It carries out the reaction Hydrolysis of Ala-|-Gly bond in repressor LexA.. In terms of biological role, represses a number of genes involved in the response to DNA damage (SOS response), including recA and lexA. In the presence of single-stranded DNA, RecA interacts with LexA causing an autocatalytic cleavage which disrupts the DNA-binding part of LexA, leading to derepression of the SOS regulon and eventually DNA repair. This is LexA repressor from Bacillus licheniformis (strain ATCC 14580 / DSM 13 / JCM 2505 / CCUG 7422 / NBRC 12200 / NCIMB 9375 / NCTC 10341 / NRRL NRS-1264 / Gibson 46).